The following is a 196-amino-acid chain: uncharacterized protein (196 aa).

The helical transmembrane segment at 71–87 (YVKLIGTGCYVAILISG) threads the bilayer.

Its subcellular location is the membrane. This is an uncharacterized protein from Dictyostelium discoideum (Social amoeba).